Reading from the N-terminus, the 467-residue chain is Ribulose bisphosphate carboxylase large chain (467 aa).

N6,N6,N6-trimethyllysine is present on lysine 5. Residues asparagine 114 and threonine 164 each contribute to the substrate site. The active-site Proton acceptor is the lysine 166. Lysine 168 is a substrate binding site. Positions 192, 194, and 195 each coordinate Mg(2+). An N6-carboxylysine modification is found at lysine 192. Residue histidine 285 is the Proton acceptor of the active site. 3 residues coordinate substrate: arginine 286, histidine 318, and serine 370.

Belongs to the RuBisCO large chain family. Type I subfamily. In terms of assembly, heterohexadecamer of 8 large chains and 8 small chains; disulfide-linked. The disulfide link is formed within the large subunit homodimers. Requires Mg(2+) as cofactor. In terms of processing, the disulfide bond which can form in the large chain dimeric partners within the hexadecamer appears to be associated with oxidative stress and protein turnover.

The protein localises to the plastid. It is found in the chloroplast. It carries out the reaction 2 (2R)-3-phosphoglycerate + 2 H(+) = D-ribulose 1,5-bisphosphate + CO2 + H2O. The enzyme catalyses D-ribulose 1,5-bisphosphate + O2 = 2-phosphoglycolate + (2R)-3-phosphoglycerate + 2 H(+). Its function is as follows. RuBisCO catalyzes two reactions: the carboxylation of D-ribulose 1,5-bisphosphate, the primary event in carbon dioxide fixation, as well as the oxidative fragmentation of the pentose substrate in the photorespiration process. Both reactions occur simultaneously and in competition at the same active site. The chain is Ribulose bisphosphate carboxylase large chain from Eriodictyon californicum (California yerba santa).